We begin with the raw amino-acid sequence, 299 residues long: HTH-type transcriptional regulator ArgP (299 aa).

The HTH lysR-type domain maps to 2–58 (FDYKLLSALAAVIEQAGFERAAQVLGLSQSAISQRIKLLEARVGQPVLVRVTPPAPT). The H-T-H motif DNA-binding region spans 19 to 38 (FERAAQVLGLSQSAISQRIK).

The protein belongs to the LysR transcriptional regulatory family. As to quaternary structure, homodimer.

Controls the transcription of genes involved in arginine and lysine metabolism. The polypeptide is HTH-type transcriptional regulator ArgP (Pseudomonas fluorescens (strain ATCC BAA-477 / NRRL B-23932 / Pf-5)).